The chain runs to 362 residues: Chemerin-like receptor 1 (362 aa).

Residues 1–37 are Extracellular-facing; the sequence is MEAEDYNASYEDYPDDVDPIVVLEELSPLEGRVVRIL. The N-linked (GlcNAc...) asparagine glycan is linked to asparagine 7. The chain crosses the membrane as a helical span at residues 38–58; the sequence is LVAVYSVICLLGILGNGLVIV. Topologically, residues 59–70 are cytoplasmic; it reads MITCKMKRTVNT. Residues 71-91 form a helical membrane-spanning segment; sequence VWFLNLAVADFLFNVFLPVHI. Residues 92–108 lie on the Extracellular side of the membrane; that stretch reads AYAALDYHWVFGTAMCK. A disulfide bridge links cysteine 107 with cysteine 184. The chain crosses the membrane as a helical span at residues 109-129; the sequence is ISNFLLIHNMFTSVFLLTVIS. The Cytoplasmic portion of the chain corresponds to 130 to 151; sequence FDRCVSVLLPVWSQNHRSVRLA. Residues 152 to 172 form a helical membrane-spanning segment; it reads YTACLVIWVLAFFLSSPSLVF. Over 173-219 the chain is Extracellular; sequence RDTARLHGKISCFNNFSLSAAVSSPWPAHPQVDPVGSGRHKVVTITR. A glycan (N-linked (GlcNAc...) asparagine) is linked at asparagine 187. The chain crosses the membrane as a helical span at residues 220–240; the sequence is FLCGFLVPGLITTACYLTIVY. The Cytoplasmic segment spans residues 241-255; sequence KLQRSRLAKTKKPFK. The helical transmembrane segment at 256–276 threads the bilayer; the sequence is IILTIIVTFFLCWCPYHAFYL. The Extracellular segment spans residues 277–281; sequence LELRR. A helical transmembrane segment spans residues 282 to 302; that stretch reads GSVPPSVFSLGVPLATAIAIA. Topologically, residues 303 to 362 are cytoplasmic; sequence NSCMNPILYVFMGQDFKKFRVALFSRLVNALSEDTGHSSYPSHRSFTKMSSMNERETGML. Serine 334 is subject to Phosphoserine. Residues 336–362 are disordered; sequence DTGHSSYPSHRSFTKMSSMNERETGML. The residue at position 337 (threonine 337) is a Phosphothreonine. Residues 339–354 show a composition bias toward polar residues; that stretch reads HSSYPSHRSFTKMSSM. Phosphoserine occurs at positions 344, 347, and 353.

Belongs to the chemokine-like receptor (CMKLR) family. Widely expressed in several tissues including adipose, muscle, liver and brain.

It is found in the cell membrane. In terms of biological role, receptor for the chemoattractant adipokine chemerin/RARRES2 and for the omega-3 fatty acid derived molecule resolvin E1. Interaction with RARRES2 initiates activation of G proteins G(i)/G(o) and beta-arrestin pathways inducing cellular responses via second messenger pathways such as intracellular calcium mobilization, phosphorylation of MAP kinases MAPK1/MAPK3 (ERK1/2), TYRO3, MAPK14/P38MAPK and PI3K leading to multifunctional effects, like, reduction of immune responses, enhancing of adipogenesis and angionesis. Resolvin E1 down-regulates cytokine production in macrophages by reducing the activation of MAPK1/3 (ERK1/2) and NF-kappa-B. Positively regulates adipogenesis and adipocyte metabolism. The polypeptide is Chemerin-like receptor 1 (CMLKR1) (Bos taurus (Bovine)).